The following is a 309-amino-acid chain: Porphobilinogen deaminase (309 aa).

The residue at position 241 (cysteine 241) is an S-(dipyrrolylmethanemethyl)cysteine.

This sequence belongs to the HMBS family. Monomer. It depends on dipyrromethane as a cofactor.

The catalysed reaction is 4 porphobilinogen + H2O = hydroxymethylbilane + 4 NH4(+). It functions in the pathway porphyrin-containing compound metabolism; protoporphyrin-IX biosynthesis; coproporphyrinogen-III from 5-aminolevulinate: step 2/4. Tetrapolymerization of the monopyrrole PBG into the hydroxymethylbilane pre-uroporphyrinogen in several discrete steps. The polypeptide is Porphobilinogen deaminase (Bacillus mycoides (strain KBAB4) (Bacillus weihenstephanensis)).